The primary structure comprises 507 residues: MVTIRADEISNIIRERIEQYNREVKIVNTGTVLQVGDGIARIHGLDEVMAGELVEFEEGTIGIALNLESNNVGVVLMGDGLMIQEGSSVKATGRIAQIPVSEAYLGRVINALAKPIDGRGEISASESRLIESPAPGIISRRSVYEPLQTGLIAIDSMIPIGRGQRELIIGDRQTGKTAVATDTILNQQGQNVICVYVAIGQKASSVAQVVTTFQERGAMEYTIVVAETADSPATLQYLAPYTGAALAEYFMYRKRHTLIIYDDPSKQAQAYRQMSLLLRRPPGREAYPGDVFYLHSRLLERAAKSSSSLGEGSMTALPIVETQSGDVSAYIPTNVISITDGQIFLSADLFNAGIRPAINVGISVSRVGSAAQIKAMKQVAGKSKLELAQFAELEAFAQFSSDLDKATQNQLARGQRLRELLKQSQAAPLTVEEQIMTIYTGTNGYLDSLEIGQVRKFLAELRNYLKTNKPQFQEIISSTKTFTEEAETLLKETIQEQMERFLLQEQA.

An ATP-binding site is contributed by 170–177 (GDRQTGKT).

This sequence belongs to the ATPase alpha/beta chains family. In terms of assembly, F-type ATPases have 2 components, CF(1) - the catalytic core - and CF(0) - the membrane proton channel. CF(1) has five subunits: alpha(3), beta(3), gamma(1), delta(1), epsilon(1). CF(0) has four main subunits: a, b, b' and c.

Its subcellular location is the plastid. The protein resides in the chloroplast thylakoid membrane. It catalyses the reaction ATP + H2O + 4 H(+)(in) = ADP + phosphate + 5 H(+)(out). Produces ATP from ADP in the presence of a proton gradient across the membrane. The alpha chain is a regulatory subunit. This Vitis vinifera (Grape) protein is ATP synthase subunit alpha, chloroplastic.